Reading from the N-terminus, the 222-residue chain is Eukaryotic translation initiation factor 3 subunit K (222 aa).

The PCI domain occupies Y46–K208.

This sequence belongs to the eIF-3 subunit K family. Component of the eukaryotic translation initiation factor 3 (eIF-3) complex. The eIF-3 complex interacts with pix.

It localises to the cytoplasm. In terms of biological role, component of the eukaryotic translation initiation factor 3 (eIF-3) complex, which is involved in protein synthesis of a specialized repertoire of mRNAs and, together with other initiation factors, stimulates binding of mRNA and methionyl-tRNAi to the 40S ribosome. The eIF-3 complex specifically targets and initiates translation of a subset of mRNAs involved in cell proliferation. The sequence is that of Eukaryotic translation initiation factor 3 subunit K from Drosophila virilis (Fruit fly).